The chain runs to 950 residues: Lon protease homolog, mitochondrial (950 aa).

The N-terminal 65 residues, 1–65 (MAASTGYVRL…VPMGGGQWRG (65 aa)), are a transit peptide targeting the mitochondrion. 2 disordered regions span residues 67–94 (WDAG…SGEG) and 212–243 (PEGL…LGAK). One can recognise a Lon N-terminal domain in the interval 112 to 360 (LPLIAISRNP…KALSLLKKEF (249 aa)). Positions 224-233 (KSRRKLKRGK) are enriched in basic residues. An ATP-binding site is contributed by 513–520 (GPPGVGKT). The Lon proteolytic domain maps to 749–939 (VTPPGVVMGL…RDIFRIAFPL (191 aa)). Residues S845 and K888 contribute to the active site.

Belongs to the peptidase S16 family. In terms of assembly, homohexamer. Organized in a ring with a central cavity. The ATP-binding and proteolytic domains (AP-domain) form a hexameric chamber, while the N-terminal domain is arranged as a trimer of dimers. DNA and RNA binding is stimulated by substrate and inhibited by ATP binding. Interacts with TWNK and mitochondrial DNA polymerase subunit POLG.

It localises to the mitochondrion matrix. It catalyses the reaction Hydrolysis of proteins in presence of ATP.. In terms of biological role, ATP-dependent serine protease that mediates the selective degradation of misfolded, unassembled or oxidatively damaged polypeptides as well as certain short-lived regulatory proteins in the mitochondrial matrix. Endogenous substrates include mitochondrial steroidogenic acute regulatory (StAR) protein, DELE1, helicase Twinkle (TWNK) and the large ribosomal subunit protein MRPL32/bL32m. MRPL32/bL32m is protected from degradation by LONP1 when it is bound to a nucleic acid (RNA), but TWNK is not. May also have a chaperone function in the assembly of inner membrane protein complexes. Participates in the regulation of mitochondrial gene expression and in the maintenance of the integrity of the mitochondrial genome. Binds to mitochondrial promoters and RNA in a single-stranded, site-specific, and strand-specific manner. May regulate mitochondrial DNA replication and/or gene expression using site-specific, single-stranded DNA binding to target the degradation of regulatory proteins binding to adjacent sites in mitochondrial promoters. The polypeptide is Lon protease homolog, mitochondrial (Lonp1) (Rattus norvegicus (Rat)).